The sequence spans 221 residues: MSSSQKKAGGKAGKPTKRSQNYAALRKAQLPKPPALKVPVVKPTNTILPQTGCVWQSLGTPLSLSSFNGLGVRFLYSFLKDFAGPRILEEDLIYRMVFSITPSYAGTFCLTDDVTTEDGRAVAHGNPMQEFPHGAFHANEKFGFELVFTAPTHAGMQNQNFKHSYAVALCLDFDAQPEGSKNPSYRFNEVWVERKAFPRAGPLRSLITVGLLDEADDLDRH.

The disordered stretch occupies residues 1–24 (MSSSQKKAGGKAGKPTKRSQNYAA). Ser2 carries the post-translational modification N-acetylserine; by host.

This sequence belongs to the alphamovirus/ilarvirus capsid protein family.

The protein localises to the virion. Functionally, capsid protein. Binds to the to the 3' end of the nonpolyadenylated viral RNA and is involved in viral RNA translation initiation. Probably binds RNA and plays a role in packaging. This chain is Capsid protein, found in Alfalfa mosaic virus (AMV).